An 88-amino-acid polypeptide reads, in one-letter code: Small ribosomal subunit protein uS15c (88 aa).

The protein belongs to the universal ribosomal protein uS15 family. Part of the 30S ribosomal subunit.

It localises to the plastid. The protein localises to the chloroplast. This is Small ribosomal subunit protein uS15c (rps15) from Crucihimalaya wallichii (Rock-cress).